Here is a 185-residue protein sequence, read N- to C-terminus: Elongation factor P (185 aa).

It belongs to the elongation factor P family.

It localises to the cytoplasm. It functions in the pathway protein biosynthesis; polypeptide chain elongation. Involved in peptide bond synthesis. Stimulates efficient translation and peptide-bond synthesis on native or reconstituted 70S ribosomes in vitro. Probably functions indirectly by altering the affinity of the ribosome for aminoacyl-tRNA, thus increasing their reactivity as acceptors for peptidyl transferase. The protein is Elongation factor P of Bacillus mycoides (strain KBAB4) (Bacillus weihenstephanensis).